The chain runs to 241 residues: Protein GrpE (241 aa).

The segment covering Gln28–Phe49 has biased composition (basic and acidic residues). Residues Gln28–Lys78 are disordered. Low complexity predominate over residues Lys50–Lys62.

It belongs to the GrpE family. In terms of assembly, homodimer.

Its subcellular location is the cytoplasm. Participates actively in the response to hyperosmotic and heat shock by preventing the aggregation of stress-denatured proteins, in association with DnaK and GrpE. It is the nucleotide exchange factor for DnaK and may function as a thermosensor. Unfolded proteins bind initially to DnaJ; upon interaction with the DnaJ-bound protein, DnaK hydrolyzes its bound ATP, resulting in the formation of a stable complex. GrpE releases ADP from DnaK; ATP binding to DnaK triggers the release of the substrate protein, thus completing the reaction cycle. Several rounds of ATP-dependent interactions between DnaJ, DnaK and GrpE are required for fully efficient folding. This Aster yellows witches'-broom phytoplasma (strain AYWB) protein is Protein GrpE.